The following is a 641-amino-acid chain: MTDAKYVLCRWKKRLWPAKVLAGTEKSAKNKRKKGYFLNVQILSLDKKIKVKSAEAKVLRKVHIEDIASSLASQDGTPAAPLEELTYRRSLRVALDVLNERQGSSSREGTTPRPPRVKPMEPASWPPKPSLSPSFLEDTAGSPGPTRRERMSQRLSGLPAGEEDLEYGVDHKEGLKRSGGLDAPAMCSASGGAQDREASRKQQADWMTPLGKQGRNPAQGPHSGQRVAPSSEGAGQEDGETGAGPAALCSPPGGRDLSPLDGCPAEHLGLDSGQRPRAHMSPHSPAQLGPAEEAADTRPLEEARPLSEEFMEPSAVNSLLEEDEDDEEPPRILLYHEPRSFEVGMLVWHKYQKYPFWPAVVKSVRRRDKKASVLFIEGNMNPRGRGISVLLRRLKHFDCKEKQALLDEAKEDFAQAIGWCVSLITDYRVRLGCGSFAGSFLEYYAADISSPVRKSIQQDVQGTRFPQLSGGDPEEPVAGSPQGRRPAYRKVLPDRSRAARDRANQKLVEYIVKARGAESHLRAILRNRKPSRWLKTFLSSGQYMTCVETYLEDEEQLDLVVKYLQGVYKQAGCQLLARGHGDGIRFILDVLLPEAIICAISAVDAVDYKTAEEKYIRGPALSSREKEIFDNQLLEERNRRC.

Positions 98-329 (LNERQGSSSR…LEEDEDDEEP (232 aa)) are disordered. Phosphoserine is present on S156. Composition is skewed to basic and acidic residues over residues 194-203 (QDREASRKQQ) and 295-307 (ADTR…RPLS). Phosphoserine is present on S307. The region spanning 343-404 (VGMLVWHKYQ…KHFDCKEKQA (62 aa)) is the PWWP domain. Positions 463–486 (TRFPQLSGGDPEEPVAGSPQGRRP) are disordered.

This sequence belongs to the PWWP3A family. Interacts with TP53BP1 (via BRCT domain); the interaction is not dependent on its phosphorylation status. Binds nucleosomes. Interacts with trimethylated 'Lys-36' of histone H3 (H3K36me3) (in vitro).

The protein localises to the nucleus. Its function is as follows. Involved in the DNA damage response pathway by contributing to the maintenance of chromatin architecture. Recruited to the vicinity of DNA breaks by TP53BP1 and plays an accessory role to facilitate damage-induced chromatin changes and promoting chromatin relaxation. Required for efficient DNA repair and cell survival following DNA damage. The polypeptide is PWWP domain-containing DNA repair factor 3A (PWWP3A) (Bos taurus (Bovine)).